A 196-amino-acid polypeptide reads, in one-letter code: GTP cyclohydrolase-2 (196 aa).

Position 49–53 (49–53) interacts with GTP; the sequence is RVHSE. Zn(2+) contacts are provided by Cys-54, Cys-65, and Cys-67. GTP-binding positions include Gln-70, 92-94, and Thr-114; that span reads EGR. Residue Asp-126 is the Proton acceptor of the active site. Arg-128 serves as the catalytic Nucleophile. GTP contacts are provided by Thr-149 and Lys-154.

The protein belongs to the GTP cyclohydrolase II family. As to quaternary structure, homodimer. It depends on Zn(2+) as a cofactor.

The catalysed reaction is GTP + 4 H2O = 2,5-diamino-6-hydroxy-4-(5-phosphoribosylamino)-pyrimidine + formate + 2 phosphate + 3 H(+). Its pathway is cofactor biosynthesis; riboflavin biosynthesis; 5-amino-6-(D-ribitylamino)uracil from GTP: step 1/4. Catalyzes the conversion of GTP to 2,5-diamino-6-ribosylamino-4(3H)-pyrimidinone 5'-phosphate (DARP), formate and pyrophosphate. This is GTP cyclohydrolase-2 from Escherichia coli O127:H6 (strain E2348/69 / EPEC).